A 127-amino-acid chain; its full sequence is MSFDVPDDLRYLESHEWVRVAGDTAEVGITAFAQDELGDVVFVELPDEGTELTAGEDFGVVESIKAVSDVYAPVSGTVTAVNDRLRDEPELLNEDPFGDGWMLTVEVDDKSETDDLLSPDAYRDQIE.

In terms of domain architecture, Lipoyl-binding spans 24–106 (TAEVGITAFA…FGDGWMLTVE (83 aa)). K65 is subject to N6-lipoyllysine.

It belongs to the GcvH family. As to quaternary structure, the glycine cleavage system is composed of four proteins: P, T, L and H. Requires (R)-lipoate as cofactor.

In terms of biological role, the glycine cleavage system catalyzes the degradation of glycine. The H protein shuttles the methylamine group of glycine from the P protein to the T protein. The polypeptide is Probable glycine cleavage system H protein (Haloarcula marismortui (strain ATCC 43049 / DSM 3752 / JCM 8966 / VKM B-1809) (Halobacterium marismortui)).